A 148-amino-acid polypeptide reads, in one-letter code: Flavodoxin (148 aa).

Residues 4 to 145 enclose the Flavodoxin-like domain; that stretch reads ALIVYGSTTG…DIVGWAHDVR (142 aa).

This sequence belongs to the flavodoxin family. FMN serves as cofactor.

Functionally, low-potential electron donor to a number of redox enzymes. The sequence is that of Flavodoxin from Nitratidesulfovibrio vulgaris (strain ATCC 29579 / DSM 644 / CCUG 34227 / NCIMB 8303 / VKM B-1760 / Hildenborough) (Desulfovibrio vulgaris).